We begin with the raw amino-acid sequence, 457 residues long: Tubulin gamma-2 chain (457 aa).

Ala-142–Gly-148 is a binding site for GTP.

This sequence belongs to the tubulin family. As to quaternary structure, interacts with Ote. Expressed in nurse cells and oocytes of developing egg chambers.

The protein resides in the cytoplasm. Its subcellular location is the cytoskeleton. It is found in the microtubule organizing center. The protein localises to the centrosome. It localises to the spindle. Functionally, tubulin is the major constituent of microtubules. The gamma chain is found at microtubule organizing centers (MTOC) such as the spindle poles or the centrosome, suggesting that it is involved in the minus-end nucleation of microtubule assembly. Required for oocyte activation and consequently for organization of the female meiotic spindle. Essential for centrosome organization and assembly of biastral mitotic spindles in embryos. Plays a role in stabilizing the augmin complex on the meiotic spindle. This Drosophila melanogaster (Fruit fly) protein is Tubulin gamma-2 chain (gammaTub37C).